The following is a 145-amino-acid chain: Transcriptional regulator MraZ (145 aa).

2 SpoVT-AbrB domains span residues 5–49 and 78–121; these read TYNH…LESE and TYKI…AKEV.

The protein belongs to the MraZ family. In terms of assembly, forms oligomers.

The protein localises to the cytoplasm. It localises to the nucleoid. In Ureaplasma parvum serovar 3 (strain ATCC 27815 / 27 / NCTC 11736), this protein is Transcriptional regulator MraZ.